We begin with the raw amino-acid sequence, 267 residues long: Placental prolactin-related protein 2 (267 aa).

2 N-linked (GlcNAc...) asparagine glycosylation sites follow: Asn99 and Asn121. Intrachain disulfides connect Cys126–Cys244 and Cys261–Cys267.

It belongs to the somatotropin/prolactin family.

The protein resides in the secreted. Placental prolactin-related proteins may play a specific role during gestation. This chain is Placental prolactin-related protein 2 (PRP2), found in Bos taurus (Bovine).